The sequence spans 373 residues: UDP-glucose 4-epimerase 3 (373 aa).

Position 27–58 (27–58) interacts with NAD(+); it reads SVLVTGGAGYIGTHTVLRLLEKGFAVTVVDNF. Serine 153 provides a ligand contact to substrate. Catalysis depends on tyrosine 177, which acts as the Proton acceptor.

The protein belongs to the NAD(P)-dependent epimerase/dehydratase family. Requires NAD(+) as cofactor.

It catalyses the reaction UDP-alpha-D-glucose = UDP-alpha-D-galactose. The protein operates within carbohydrate metabolism; galactose metabolism. Catalyzes the interconversion between UDP-glucose and UDP-galactose. The protein is UDP-glucose 4-epimerase 3 (UGE-3) of Oryza sativa subsp. japonica (Rice).